Here is a 599-residue protein sequence, read N- to C-terminus: Elongation factor 4 (599 aa).

In terms of domain architecture, tr-type G spans 4–186 (KYIRNFSIIA…AIVEKVPPPK (183 aa)). GTP-binding positions include 16–21 (DHGKST) and 133–136 (NKID).

The protein belongs to the TRAFAC class translation factor GTPase superfamily. Classic translation factor GTPase family. LepA subfamily.

The protein resides in the cell inner membrane. The enzyme catalyses GTP + H2O = GDP + phosphate + H(+). Functionally, required for accurate and efficient protein synthesis under certain stress conditions. May act as a fidelity factor of the translation reaction, by catalyzing a one-codon backward translocation of tRNAs on improperly translocated ribosomes. Back-translocation proceeds from a post-translocation (POST) complex to a pre-translocation (PRE) complex, thus giving elongation factor G a second chance to translocate the tRNAs correctly. Binds to ribosomes in a GTP-dependent manner. The polypeptide is Elongation factor 4 (Bdellovibrio bacteriovorus (strain ATCC 15356 / DSM 50701 / NCIMB 9529 / HD100)).